A 506-amino-acid polypeptide reads, in one-letter code: Kynurenine 3-monooxygenase (506 aa).

This sequence belongs to the aromatic-ring hydroxylase family. KMO subfamily. It depends on FAD as a cofactor.

The protein localises to the mitochondrion outer membrane. It carries out the reaction L-kynurenine + NADPH + O2 + H(+) = 3-hydroxy-L-kynurenine + NADP(+) + H2O. Its pathway is cofactor biosynthesis; NAD(+) biosynthesis; quinolinate from L-kynurenine: step 1/3. Functionally, catalyzes the hydroxylation of L-kynurenine (L-Kyn) to form 3-hydroxy-L-kynurenine (L-3OHKyn). Required for synthesis of quinolinic acid. The chain is Kynurenine 3-monooxygenase (bna4) from Emericella nidulans (strain FGSC A4 / ATCC 38163 / CBS 112.46 / NRRL 194 / M139) (Aspergillus nidulans).